Reading from the N-terminus, the 388-residue chain is Succinate--CoA ligase [ADP-forming] subunit beta (388 aa).

The 236-residue stretch at 9 to 244 (KELFRTYGIP…TDEEDPLEVE (236 aa)) folds into the ATP-grasp domain. ATP is bound by residues K46, 53–55 (GRG), E99, V102, and E107. N199 and D213 together coordinate Mg(2+). Residues N264 and 321–323 (GIL) contribute to the substrate site.

This sequence belongs to the succinate/malate CoA ligase beta subunit family. As to quaternary structure, heterotetramer of two alpha and two beta subunits. It depends on Mg(2+) as a cofactor.

It carries out the reaction succinate + ATP + CoA = succinyl-CoA + ADP + phosphate. It catalyses the reaction GTP + succinate + CoA = succinyl-CoA + GDP + phosphate. Its pathway is carbohydrate metabolism; tricarboxylic acid cycle; succinate from succinyl-CoA (ligase route): step 1/1. Succinyl-CoA synthetase functions in the citric acid cycle (TCA), coupling the hydrolysis of succinyl-CoA to the synthesis of either ATP or GTP and thus represents the only step of substrate-level phosphorylation in the TCA. The beta subunit provides nucleotide specificity of the enzyme and binds the substrate succinate, while the binding sites for coenzyme A and phosphate are found in the alpha subunit. The polypeptide is Succinate--CoA ligase [ADP-forming] subunit beta (Desulfosudis oleivorans (strain DSM 6200 / JCM 39069 / Hxd3) (Desulfococcus oleovorans)).